Here is a 241-residue protein sequence, read N- to C-terminus: Orotidine 5'-phosphate decarboxylase (241 aa).

Substrate is bound by residues Asp15, Lys36, 63 to 72, Thr127, Arg189, Gln198, Gly218, and Arg219; that span reads DLKFHDIPNT. Residue Lys65 is the Proton donor of the active site.

The protein belongs to the OMP decarboxylase family. Type 1 subfamily. Homodimer.

It catalyses the reaction orotidine 5'-phosphate + H(+) = UMP + CO2. The protein operates within pyrimidine metabolism; UMP biosynthesis via de novo pathway; UMP from orotate: step 2/2. Catalyzes the decarboxylation of orotidine 5'-monophosphate (OMP) to uridine 5'-monophosphate (UMP). The chain is Orotidine 5'-phosphate decarboxylase from Prochlorococcus marinus (strain MIT 9211).